The following is a 425-amino-acid chain: Enolase (425 aa).

Position 163 (Gln-163) interacts with (2R)-2-phosphoglycerate. Glu-205 (proton donor) is an active-site residue. Residues Asp-242, Glu-285, and Asp-312 each contribute to the Mg(2+) site. Residues Lys-337, Arg-366, Ser-367, and Lys-388 each contribute to the (2R)-2-phosphoglycerate site. Lys-337 serves as the catalytic Proton acceptor.

The protein belongs to the enolase family. Mg(2+) is required as a cofactor.

It localises to the cytoplasm. The protein localises to the secreted. It is found in the cell surface. The enzyme catalyses (2R)-2-phosphoglycerate = phosphoenolpyruvate + H2O. It functions in the pathway carbohydrate degradation; glycolysis; pyruvate from D-glyceraldehyde 3-phosphate: step 4/5. Functionally, catalyzes the reversible conversion of 2-phosphoglycerate (2-PG) into phosphoenolpyruvate (PEP). It is essential for the degradation of carbohydrates via glycolysis. The chain is Enolase from Syntrophomonas wolfei subsp. wolfei (strain DSM 2245B / Goettingen).